We begin with the raw amino-acid sequence, 242 residues long: Probable inactive serine protease 58 (242 aa).

The signal sequence occupies residues 1–17 (MNLILLWALLNLPVALT). The Peptidase S1 domain occupies 18–240 (FDPNYKDDIT…YIPWIENTIQ (223 aa)). 4 cysteine pairs are disulfide-bonded: cysteine 41-cysteine 57, cysteine 134-cysteine 202, cysteine 166-cysteine 181, and cysteine 192-cysteine 216. An N-linked (GlcNAc...) asparagine glycan is attached at asparagine 157.

It belongs to the peptidase S1 family.

The protein resides in the secreted. The protein is Probable inactive serine protease 58 (PRSS58) of Bos taurus (Bovine).